The sequence spans 445 residues: rRNA methyltransferase 3B, mitochondrial (445 aa).

The N-terminal 37 residues, 1–37 (MATRIASMRFRCALFQSALTLGRNEVNIKRYVRRRRA), are a transit peptide targeting the mitochondrion. 2 disordered regions span residues 52-90 (EGVI…SQPV) and 311-334 (HSTT…SDYG). Composition is skewed to polar residues over residues 54-70 (VISQ…NDIT), 78-90 (IENP…SQPV), and 311-324 (HSTT…NTTP). The S-adenosyl-L-methionine site is built by glycine 387, isoleucine 411, and leucine 420.

It belongs to the class IV-like SAM-binding methyltransferase superfamily. RNA methyltransferase TrmH family.

It localises to the mitochondrion. The catalysed reaction is a uridine in rRNA + S-adenosyl-L-methionine = a 2'-O-methyluridine in rRNA + S-adenosyl-L-homocysteine + H(+). Its function is as follows. S-adenosyl-L-methionine-dependent 2'-O-ribose methyltransferase that catalyzes the formation of 2'-O-methylguanosine at position 1485 (Gm1485) in the mitochondrial large subunit ribosomal RNA (mtLSU rRNA), a conserved modification in the peptidyl transferase domain of the mtLSU rRNA. Also required for formation of 2'-O-methyluridine at position 1484 (Um1484) mediated by MRM2. This chain is rRNA methyltransferase 3B, mitochondrial, found in Danio rerio (Zebrafish).